Consider the following 603-residue polypeptide: Linalool synthase Tps-5031L19, chloroplastic (603 aa).

Residues 1 to 36 (MSSMRTYVAIMKKPSVEHVDNVDKKASKPSWRVSLS) constitute a chloroplast transit peptide. (2E)-geranyl diphosphate is bound by residues Arg322, Asp359, Asp363, Arg500, and Asp503. The Mg(2+) site is built by Asp359 and Asp363. A DDXXD motif motif is present at residues 359–363 (DDVYD). Mg(2+)-binding residues include Asp503, Thr507, and Glu511.

Belongs to the terpene synthase family. Tpsb subfamily. In terms of assembly, monomer. Mg(2+) is required as a cofactor. Requires Mn(2+) as cofactor.

The protein resides in the plastid. It localises to the chloroplast. It catalyses the reaction (2E)-geranyl diphosphate + H2O = linalool + diphosphate. It functions in the pathway secondary metabolite biosynthesis; terpenoid biosynthesis. Functionally, monoterpene synthase (mono-TPS) involved in the biosynthesis of monoterpenes natural products. Catalyzes the conversion of (2E)-geranyl diphosphate (GPP) into linalool. This Perilla frutescens var. hirtella (Perilla citriodora) protein is Linalool synthase Tps-5031L19, chloroplastic.